Consider the following 161-residue polypeptide: Small ribosomal subunit protein uS9 (161 aa).

Disordered stretches follow at residues 1 to 28 and 142 to 161; these read MAQI…PKAP and KERK…FSKR.

Belongs to the universal ribosomal protein uS9 family.

This chain is Small ribosomal subunit protein uS9, found in Clavibacter sepedonicus (Clavibacter michiganensis subsp. sepedonicus).